We begin with the raw amino-acid sequence, 225 residues long: MNATTAPLPYSAARLHELAHVLIANIRELAHAGWTPATSSNFSHRLDEQHAAITVSGRDKGRLVEEDIMVVDFDCLAVGRPLRPSAETLLHTQLYRRFPEICCVLHTHSPVQTIASRLYAGSDVIRLEGYELLKAFEGNTTHETAVEVPVFANTQDMQVLAAQVDALLDKQSMWGYLIEGHGLYAWGRSMAEARRHLEAFEFLLQCELELLKLRGTRQVVPVPHS.

The Zn(2+) site is built by H106 and H108.

Belongs to the aldolase class II family. MtnB subfamily. The cofactor is Zn(2+).

It catalyses the reaction 5-(methylsulfanyl)-D-ribulose 1-phosphate = 5-methylsulfanyl-2,3-dioxopentyl phosphate + H2O. The protein operates within amino-acid biosynthesis; L-methionine biosynthesis via salvage pathway; L-methionine from S-methyl-5-thio-alpha-D-ribose 1-phosphate: step 2/6. Catalyzes the dehydration of methylthioribulose-1-phosphate (MTRu-1-P) into 2,3-diketo-5-methylthiopentyl-1-phosphate (DK-MTP-1-P). In Xanthomonas oryzae pv. oryzae (strain MAFF 311018), this protein is Methylthioribulose-1-phosphate dehydratase.